Reading from the N-terminus, the 435-residue chain is Serine hydroxymethyltransferase (435 aa).

(6S)-5,6,7,8-tetrahydrofolate-binding positions include Leu-133 and 137–139 (GHL). Residue Lys-242 is modified to N6-(pyridoxal phosphate)lysine.

It belongs to the SHMT family. In terms of assembly, homodimer. Requires pyridoxal 5'-phosphate as cofactor.

It is found in the cytoplasm. The enzyme catalyses (6R)-5,10-methylene-5,6,7,8-tetrahydrofolate + glycine + H2O = (6S)-5,6,7,8-tetrahydrofolate + L-serine. It functions in the pathway one-carbon metabolism; tetrahydrofolate interconversion. The protein operates within amino-acid biosynthesis; glycine biosynthesis; glycine from L-serine: step 1/1. Functionally, catalyzes the reversible interconversion of serine and glycine with tetrahydrofolate (THF) serving as the one-carbon carrier. This reaction serves as the major source of one-carbon groups required for the biosynthesis of purines, thymidylate, methionine, and other important biomolecules. Also exhibits THF-independent aldolase activity toward beta-hydroxyamino acids, producing glycine and aldehydes, via a retro-aldol mechanism. This chain is Serine hydroxymethyltransferase, found in Hyphomonas neptunium (strain ATCC 15444).